Here is a 289-residue protein sequence, read N- to C-terminus: Tachykinins (289 aa).

Positions Met-1–Ala-24 are cleaved as a signal peptide. A propeptide spanning residues Ala-25–Val-49 is cleaved from the precursor. A disordered region spans residues Glu-28 to Pro-80. Arg-61 bears the Arginine amide mark. Residues Gly-62–Ala-72 are compositionally biased toward basic and acidic residues. Asn-95 carries the asparagine amide modification. The residue at position 110 (Arg-110) is an Arginine amide. Residue Val-155 is modified to Valine amide. A disordered region spans residues Gly-156–Asp-175. Arginine amide is present on residues Arg-167, Arg-198, Arg-237, and Arg-281. A propeptide spanning residues Pro-285–Glu-289 is cleaved from the precursor.

This sequence belongs to the tachykinin family.

Its subcellular location is the secreted. In terms of biological role, tachykinins are active peptides which excite neurons, evoke behavioral responses, are potent vasodilators and secretagogues, and contract (directly or indirectly) many smooth muscles. Stimulates gut muscle contractions. The sequence is that of Tachykinins from Drosophila pseudoobscura pseudoobscura (Fruit fly).